The chain runs to 83 residues: Large ribosomal subunit protein eL31 (83 aa).

It belongs to the eukaryotic ribosomal protein eL31 family.

In Methanococcus aeolicus (strain ATCC BAA-1280 / DSM 17508 / OCM 812 / Nankai-3), this protein is Large ribosomal subunit protein eL31.